The sequence spans 350 residues: 2,5-dihydroxypyridine 5,6-dioxygenase (350 aa).

Fe cation is bound by residues H265, H318, and D320.

The cofactor is Fe(2+).

The enzyme catalyses 2,5-dihydroxypyridine + O2 = N-formylmaleamate + H(+). Its pathway is cofactor degradation; nicotinate degradation. Its function is as follows. Catalyzes the dioxygenolytic ring cleavage of 2,5-dihydroxypyridine between carbons 5 and 6 generating N-formylmaleamate in the aerobic nicotinate degradation pathway. The protein is 2,5-dihydroxypyridine 5,6-dioxygenase (nicX) of Pseudomonas putida (strain ATCC 47054 / DSM 6125 / CFBP 8728 / NCIMB 11950 / KT2440).